We begin with the raw amino-acid sequence, 229 residues long: Non-structural protein P8 (229 aa).

Positions 13–31 are enriched in basic and acidic residues; it reads KMKHNQDRVEEPSQVRVDD. The segment at 13 to 46 is disordered; it reads KMKHNQDRVEEPSQVRVDDTISQPPRYAPSAPMP. The segment covering 36-46 has biased composition (low complexity); that stretch reads PPRYAPSAPMP. The next 2 membrane-spanning stretches (helical) occupy residues 119-139 and 162-182; these read IIHTTLLVAAVVALLTSVCTL and SLNPMLGVVNLGATFLMMVCA.

Belongs to the orbivirus NS3 family. As to quaternary structure, forms homooligomers via coiled-coil motif. Interacts with host OPTN; this interaction inhibits innate immune response.

It localises to the host cell membrane. The protein resides in the host Golgi apparatus. Plays a role in the inhibition of host innate immune response. Interacts with host OPTN and thus inhibits the recruitment of TBK1 to the host Golgi apparatus. In turn, downstream partner IRF3 cannot be activated and IFN-beta production is impaired. Functionally, facilitates viral particle release either by increasing plasma membrane permeability through a viroporin-like activity or by viral budding. This is Non-structural protein P8 (Segment-10) from Antilocapra americana (Pronghorn).